Consider the following 416-residue polypeptide: Tyrosine--tRNA ligase (416 aa).

Position 40 (tyrosine 40) interacts with L-tyrosine. The 'HIGH' region signature appears at 45-54 (ATAASLHVGH). Tyrosine 177 and glutamine 181 together coordinate L-tyrosine. The short motif at 237–241 (KMGKS) is the 'KMSKS' region element. ATP is bound at residue lysine 240. The region spanning 351 to 416 (LSVAHFLVAA…RKKHKLVRLS (66 aa)) is the S4 RNA-binding domain.

The protein belongs to the class-I aminoacyl-tRNA synthetase family. TyrS type 1 subfamily. Homodimer.

Its subcellular location is the cytoplasm. It carries out the reaction tRNA(Tyr) + L-tyrosine + ATP = L-tyrosyl-tRNA(Tyr) + AMP + diphosphate + H(+). In terms of biological role, catalyzes the attachment of tyrosine to tRNA(Tyr) in a two-step reaction: tyrosine is first activated by ATP to form Tyr-AMP and then transferred to the acceptor end of tRNA(Tyr). The sequence is that of Tyrosine--tRNA ligase from Cereibacter sphaeroides (strain KD131 / KCTC 12085) (Rhodobacter sphaeroides).